Reading from the N-terminus, the 265-residue chain is Zinc import ATP-binding protein ZnuC (265 aa).

The ABC transporter domain maps to 6–221 (IRLEQVAVTL…PAFVELFGKN (216 aa)). 38 to 45 (GPNGAGKT) lines the ATP pocket. A disordered region spans residues 245-265 (DAPATSSHTHTHVHGDHCKHG).

The protein belongs to the ABC transporter superfamily. Zinc importer (TC 3.A.1.15.5) family. In terms of assembly, the complex is composed of two ATP-binding proteins (ZnuC), two transmembrane proteins (ZnuB) and a solute-binding protein (ZnuA).

The protein resides in the cell inner membrane. The catalysed reaction is Zn(2+)(out) + ATP(in) + H2O(in) = Zn(2+)(in) + ADP(in) + phosphate(in) + H(+)(in). Its function is as follows. Part of the ABC transporter complex ZnuABC involved in zinc import. Responsible for energy coupling to the transport system. The chain is Zinc import ATP-binding protein ZnuC from Pseudomonas savastanoi pv. phaseolicola (strain 1448A / Race 6) (Pseudomonas syringae pv. phaseolicola (strain 1448A / Race 6)).